The following is a 772-amino-acid chain: TBC domain-containing protein C4G8.04 (772 aa).

A compositionally biased stretch (polar residues) spans 143-161 (SFFPSSQEPSIPENPSSLT). 2 disordered regions span residues 143–163 (SFFPSSQEPSIPENPSSLTGE) and 275–294 (KFFRSSPRCSTPSVSSTFVS). A compositionally biased stretch (low complexity) spans 275–291 (KFFRSSPRCSTPSVSST). Residue T395 is modified to Phosphothreonine. The 190-residue stretch at 504 to 693 (GVPLCYKAKV…RIFDMLFCDG (190 aa)) folds into the Rab-GAP TBC domain.

The protein is TBC domain-containing protein C4G8.04 of Schizosaccharomyces pombe (strain 972 / ATCC 24843) (Fission yeast).